The chain runs to 373 residues: Carnosine N-methyltransferase (373 aa).

S-adenosyl-L-methionine is bound by residues glutamine 110, arginine 113, glycine 154, glutamate 175, aspartate 242, phenylalanine 243, and cysteine 262. Aspartate 266 is a carnosine binding site. An S-adenosyl-L-methionine-binding site is contributed by tyrosine 274. Carnosine-binding residues include histidine 297 and tyrosine 356.

It belongs to the carnosine N-methyltransferase family.

It is found in the cytoplasm. The protein localises to the nucleus. It carries out the reaction carnosine + S-adenosyl-L-methionine = anserine + S-adenosyl-L-homocysteine + H(+). Functionally, N-methyltransferase that mediates the formation of anserine (beta-alanyl-N(Pi)-methyl-L-histidine) from carnosine. Also methylates other L-histidine-containing di- and tripeptides such as Gly-Gly-His, Gly-His and homocarnosine (GABA-His). This Schizosaccharomyces pombe (strain 972 / ATCC 24843) (Fission yeast) protein is Carnosine N-methyltransferase.